Consider the following 662-residue polypeptide: Probable conjugal transfer protein TrbE part 2 (662 aa).

307–314 (GPTGSGKS) is an ATP binding site.

Belongs to the TrbE/VirB4 family.

The polypeptide is Probable conjugal transfer protein TrbE part 2 (trbEB) (Sinorhizobium fredii (strain NBRC 101917 / NGR234)).